A 328-amino-acid chain; its full sequence is 2,3-diketo-L-gulonate-binding periplasmic protein YiaO (328 aa).

Positions 1 to 24 (MKLRSVTYALFIAGLAAFSTSSLA) are cleaved as a signal peptide.

As to quaternary structure, the complex comprises the extracytoplasmic solute receptor protein YiaO, and the two transmembrane proteins YiaM and YiaN.

The protein resides in the periplasm. Its function is as follows. Part of the tripartite ATP-independent periplasmic (TRAP) transport system YiaMNO involved in the uptake of 2,3-diketo-L-gulonate. This protein specifically binds 2,3-diketo-L-gulonate. Is not able to bind either L-ascorbate or dehydroascorbate. The chain is 2,3-diketo-L-gulonate-binding periplasmic protein YiaO (yiaO) from Escherichia coli (strain K12).